Consider the following 113-residue polypeptide: Large ribosomal subunit protein bL19 (113 aa).

This sequence belongs to the bacterial ribosomal protein bL19 family.

This protein is located at the 30S-50S ribosomal subunit interface and may play a role in the structure and function of the aminoacyl-tRNA binding site. This chain is Large ribosomal subunit protein bL19 (rplS), found in Mycobacterium bovis (strain ATCC BAA-935 / AF2122/97).